The chain runs to 354 residues: Ornithine cyclodeaminase (354 aa).

Residues R53 and K77 each coordinate L-ornithine. NAD(+) contacts are provided by residues T92, R120, 147–148 (AQ), D169, T209, 232–235 (VGGD), K239, and S300. Position 120 (R120) interacts with L-ornithine. D235 contributes to the L-ornithine binding site. D235 serves as the catalytic Proton donor/acceptor. V301 serves as a coordination point for L-ornithine.

Belongs to the ornithine cyclodeaminase/mu-crystallin family. Requires NAD(+) as cofactor.

It carries out the reaction L-ornithine = L-proline + NH4(+). Its pathway is amino-acid biosynthesis; L-proline biosynthesis; L-proline from L-ornithine: step 1/1. Is subject to substrate inhibition. Is regulated by L-arginine, which stimulates enzymatic activity at 0.1-1 mM while inhibits activity at higher concentrations, and has pronounced effects on the optima for pH and temperature and on the Km for L-ornithine. Is not inhibited by L-proline. Its function is as follows. Catalyzes the conversion of L-ornithine into L-proline with release of ammonia. Is involved in the utilization of nopaline, a catabolic pathway that proceeds through L-arginine and L-ornithine to L-proline. Nopaline is a predominant opine in plant cells transformed with Ti plasmid pTiC58. The polypeptide is Ornithine cyclodeaminase (Agrobacterium fabrum (strain C58 / ATCC 33970) (Agrobacterium tumefaciens (strain C58))).